Reading from the N-terminus, the 136-residue chain is MRSGNSGSCNHFLVFLRKVVTCHNAAIVRKTTKYNSLKHKTPPLPLALALADALSPQNFFHITSPASLSYSWRRADPGRKGRTQPLPTQGSARRFLHTPQGGVEPCRVIHIITSYMKSISYHIGIHSTKEEKNCNH.

Residues 74–97 (RADPGRKGRTQPLPTQGSARRFLH) are disordered.

This is an uncharacterized protein from Saccharomyces cerevisiae (strain ATCC 204508 / S288c) (Baker's yeast).